Here is a 327-residue protein sequence, read N- to C-terminus: Ribosomal RNA large subunit methyltransferase F (327 aa).

Belongs to the methyltransferase superfamily. METTL16/RlmF family.

The protein localises to the cytoplasm. The catalysed reaction is adenosine(1618) in 23S rRNA + S-adenosyl-L-methionine = N(6)-methyladenosine(1618) in 23S rRNA + S-adenosyl-L-homocysteine + H(+). Functionally, specifically methylates the adenine in position 1618 of 23S rRNA. This Marinomonas sp. (strain MWYL1) protein is Ribosomal RNA large subunit methyltransferase F.